The sequence spans 501 residues: ATP synthase subunit alpha (501 aa).

An ATP-binding site is contributed by 169–176 (GDRQTGKT).

This sequence belongs to the ATPase alpha/beta chains family. In terms of assembly, F-type ATPases have 2 components, CF(1) - the catalytic core - and CF(0) - the membrane proton channel. CF(1) has five subunits: alpha(3), beta(3), gamma(1), delta(1), epsilon(1). CF(0) has three main subunits: a(1), b(2) and c(9-12). The alpha and beta chains form an alternating ring which encloses part of the gamma chain. CF(1) is attached to CF(0) by a central stalk formed by the gamma and epsilon chains, while a peripheral stalk is formed by the delta and b chains.

The protein resides in the cell membrane. It carries out the reaction ATP + H2O + 4 H(+)(in) = ADP + phosphate + 5 H(+)(out). Produces ATP from ADP in the presence of a proton gradient across the membrane. The alpha chain is a regulatory subunit. The polypeptide is ATP synthase subunit alpha (Streptococcus pneumoniae (strain Hungary19A-6)).